The chain runs to 974 residues: MKNAFLKTHLFPLCPLDESGSQWLKDIEEQARKENLESLVSYFSAKGKQVDFISAVMTLSPFLREVLIANPSYLSPLLYVDIETRLSEIIDDVALIDKSESINETALMAALRRKKREAHILIALADLSGVFTYEISCTWLTRLGEAALGVALRFLLREAHDHGKISLSSRDNPEKDSGLIILGLGKLGAGELNYSSDIDLIVFIDEMSPHIGDLSESVDVFSKMVRRLIRIIQERTAEGYVFRLDFRLRPDPGSTPLALPVRTALRYYEGRGQNWERAAMIKARPVAGDKRAGFKFLKELFPYVWRKYLDYAAIADIHSIKRQIHACKNYGQITAYGHNIKLGRGGIREIEFFVQTQQLIAGGRFPQLRGRQTVAMLTELHTLGWISEKTSDNLIKSYAFLRNVEHRIQMLADEQTHLLPNDVSQFTSVAYLMGYQESSSFIRDLLKVLQVVEKHYAALFENEQELGLEIGNLVFTGEEDDPETLITLSCLGFERASDICRIMRTLHCGRYKATQSAEARERLTELTPALLKAFGAIKRADEAMLRFDSFLQGLPSGIQLFSLLQSNPSLLDMLVLIMGAAPRLAEIITRKPHVFDGMLDPTILSELPTKTYLENRLEYFLEGVIPYEEILDHLRVFADEQRFLIGIRILNGAITGEKAGFAFTALADLMIAKTLAAVQEEFSRIHGNIKGGRVGILGMGKLGSCELTAGSDVDLILVYEHDEDAEISDGEKPLYISQYYTRFTKRLIAALSTLTSQGVLYAVDLRLRPLGNKGPVAVSFEFFRKYYRKEAWIWEYLALTRARGIAGDPNFLQNLENEVCAIIALPHDKKDVAKAVREMRTLIEKEKPPENRWDLKMMSGGIMDVEFIAQFALITHVVAFQIGASTADILAHLPNSVLNQSCIVDLHRAYSLYTNLNQMIRLCLNDAFDPHDMPPGLSDLLLSSVGEPDLLRVEKLIEETAQSVCSIFKQIMKH.

The interval 1–464 is adenylyl removase; it reads MKNAFLKTHL…HYAALFENEQ (464 aa). The interval 468-974 is adenylyl transferase; sequence LEIGNLVFTG…CSIFKQIMKH (507 aa).

This sequence belongs to the GlnE family. The cofactor is Mg(2+).

The catalysed reaction is [glutamine synthetase]-O(4)-(5'-adenylyl)-L-tyrosine + phosphate = [glutamine synthetase]-L-tyrosine + ADP. It catalyses the reaction [glutamine synthetase]-L-tyrosine + ATP = [glutamine synthetase]-O(4)-(5'-adenylyl)-L-tyrosine + diphosphate. Its function is as follows. Involved in the regulation of glutamine synthetase GlnA, a key enzyme in the process to assimilate ammonia. When cellular nitrogen levels are high, the C-terminal adenylyl transferase (AT) inactivates GlnA by covalent transfer of an adenylyl group from ATP to specific tyrosine residue of GlnA, thus reducing its activity. Conversely, when nitrogen levels are low, the N-terminal adenylyl removase (AR) activates GlnA by removing the adenylyl group by phosphorolysis, increasing its activity. The regulatory region of GlnE binds the signal transduction protein PII (GlnB) which indicates the nitrogen status of the cell. This is Bifunctional glutamine synthetase adenylyltransferase/adenylyl-removing enzyme from Bartonella quintana (strain Toulouse) (Rochalimaea quintana).